A 442-amino-acid chain; its full sequence is Cell division protein FtsA (442 aa).

It belongs to the FtsA/MreB family. As to quaternary structure, self-interacts. Interacts with FtsZ.

It localises to the cell inner membrane. In terms of biological role, cell division protein that is involved in the assembly of the Z ring. May serve as a membrane anchor for the Z ring. The protein is Cell division protein FtsA of Rhizobium meliloti (strain 1021) (Ensifer meliloti).